The primary structure comprises 651 residues: Maternal embryonic leucine zipper kinase (651 aa).

In terms of domain architecture, Protein kinase spans 11-263 (YELHETIGTG…MKNLLNHPWI (253 aa)). ATP is bound by residues 17–25 (IGTGGFAKV) and lysine 40. Threonine 56 carries the phosphothreonine; by autocatalysis modification. Catalysis depends on aspartate 132, which acts as the Proton acceptor. Position 163 is a phosphotyrosine; by autocatalysis (tyrosine 163). Threonine 167 carries the phosphothreonine; by autocatalysis modification. Phosphoserine; by autocatalysis is present on residues serine 171 and serine 253. Residues 282–321 (LDDDCVTELSVHHRNNRQTMEDLISLWQYDHLTATYLLLL) are UBA-like. The autoinhibitory region stretch occupies residues 326 to 651 (RGKPVRLRLS…VEDILSSCKV (326 aa)). Serine 336, serine 343, and serine 356 each carry phosphoserine; by autocatalysis. A Phosphotyrosine modification is found at tyrosine 367. Serine 391 is subject to Phosphoserine; by autocatalysis. Residue threonine 398 is modified to Phosphothreonine; by autocatalysis. The residue at position 407 (serine 407) is a Phosphoserine; by autocatalysis. Residue threonine 409 is modified to Phosphothreonine. A Phosphoserine; by autocatalysis modification is found at serine 431. A Phosphothreonine modification is found at threonine 478. A Phosphothreonine; by autocatalysis modification is found at threonine 494. Residue serine 498 is modified to Phosphoserine. The residue at position 505 (serine 505) is a Phosphoserine; by autocatalysis. Threonine 518 carries the phosphothreonine modification. Serine 529 carries the phosphoserine; by autocatalysis modification. Serine 529 carries the phosphoserine modification. Threonine 539 bears the Phosphothreonine; by autocatalysis mark. Positions 602-651 (SDFGKVTMQFELEVCQLQKPDVVGIRRQRLKGDAWVYKRLVEDILSSCKV) constitute a KA1 domain.

The protein belongs to the protein kinase superfamily. CAMK Ser/Thr protein kinase family. SNF1 subfamily. Monomer. Interacts with ZNF622 and PPP1R8. In terms of processing, autophosphorylated: autophosphorylation of the T-loop at Thr-167 and Ser-171 is required for activation. Thr-478 phosphorylation during mitosis promotes interaction with PPP1R8. As to expression, expressed in placenta, kidney, thymus, testis, ovary and intestine.

It localises to the cell membrane. The catalysed reaction is L-tyrosyl-[protein] + ATP = O-phospho-L-tyrosyl-[protein] + ADP + H(+). It carries out the reaction L-seryl-[protein] + ATP = O-phospho-L-seryl-[protein] + ADP + H(+). It catalyses the reaction L-threonyl-[protein] + ATP = O-phospho-L-threonyl-[protein] + ADP + H(+). Activated by autophosphorylation of the T-loop at Thr-167 and Ser-171: in contrast to other members of the SNF1 subfamily, phosphorylation at Thr-167 is not mediated by STK11/LKB1 but via autophosphorylation instead. Inhibited by calcium-binding. Kinase activity is also regulated by reducing agents: dithiothreitol (DTT) or reduced glutathione are required for kinase activity in vitro; such dependence is however not due to the presence of disulfide bonds. In terms of biological role, serine/threonine-protein kinase involved in various processes such as cell cycle regulation, self-renewal of stem cells, apoptosis and splicing regulation. Has a broad substrate specificity; phosphorylates BCL2L14, CDC25B, MAP3K5/ASK1 and ZNF622. Acts as an activator of apoptosis by phosphorylating and activating MAP3K5/ASK1. Acts as a regulator of cell cycle, notably by mediating phosphorylation of CDC25B, promoting localization of CDC25B to the centrosome and the spindle poles during mitosis. Plays a key role in cell proliferation and carcinogenesis. Required for proliferation of embryonic and postnatal multipotent neural progenitors. Phosphorylates and inhibits BCL2L14, possibly leading to affect mammary carcinogenesis by mediating inhibition of the pro-apoptotic function of BCL2L14. Also involved in the inhibition of spliceosome assembly during mitosis by phosphorylating ZNF622, thereby contributing to its redirection to the nucleus. May also play a role in primitive hematopoiesis. The sequence is that of Maternal embryonic leucine zipper kinase (MELK) from Homo sapiens (Human).